A 215-amino-acid chain; its full sequence is 3,4-dihydroxy-2-butanone 4-phosphate synthase (215 aa).

D-ribulose 5-phosphate contacts are provided by residues 38 to 39 (RE), aspartate 43, 151 to 155 (RRGHT), and glutamate 175. Glutamate 39 serves as a coordination point for Mg(2+). Residue histidine 154 coordinates Mg(2+).

This sequence belongs to the DHBP synthase family. Homodimer. The cofactor is Mg(2+). Mn(2+) serves as cofactor.

It catalyses the reaction D-ribulose 5-phosphate = (2S)-2-hydroxy-3-oxobutyl phosphate + formate + H(+). The protein operates within cofactor biosynthesis; riboflavin biosynthesis; 2-hydroxy-3-oxobutyl phosphate from D-ribulose 5-phosphate: step 1/1. Its function is as follows. Catalyzes the conversion of D-ribulose 5-phosphate to formate and 3,4-dihydroxy-2-butanone 4-phosphate. The protein is 3,4-dihydroxy-2-butanone 4-phosphate synthase of Haemophilus influenzae (strain ATCC 51907 / DSM 11121 / KW20 / Rd).